A 173-amino-acid chain; its full sequence is NADH-ubiquinone oxidoreductase chain 6 (173 aa).

A run of 5 helical transmembrane segments spans residues M1 to S21, Y27 to G47, V48 to V68, V87 to F107, and C139 to L159.

Belongs to the complex I subunit 6 family.

The protein localises to the mitochondrion membrane. The enzyme catalyses a ubiquinone + NADH + 5 H(+)(in) = a ubiquinol + NAD(+) + 4 H(+)(out). Functionally, core subunit of the mitochondrial membrane respiratory chain NADH dehydrogenase (Complex I) that is believed to belong to the minimal assembly required for catalysis. Complex I functions in the transfer of electrons from NADH to the respiratory chain. The immediate electron acceptor for the enzyme is believed to be ubiquinone. In Aethia cristatella (Crested auklet), this protein is NADH-ubiquinone oxidoreductase chain 6 (MT-ND6).